The primary structure comprises 62 residues: Cuticle protein 6.4 (62 aa).

Component of the cuticle of migratory locust which contains more than 100 different structural proteins. In Locusta migratoria (Migratory locust), this protein is Cuticle protein 6.4.